We begin with the raw amino-acid sequence, 210 residues long: Ras-related protein Rab-43 (210 aa).

GTP is bound at residue 23–30 (GDASVGKT). The Effector region motif lies at 45-53 (QGSTIGVDF). Ser-47 bears the Phosphoserine mark. Residue 71–75 (DTAGQ) coordinates GTP. Phosphothreonine is present on Thr-80. GTP is bound by residues 129–132 (NKSD) and 161–162 (AK). 2 S-geranylgeranyl cysteine lipidation sites follow: Cys-208 and Cys-210. Position 210 is a cysteine methyl ester (Cys-210).

The protein belongs to the small GTPase superfamily. Rab family. Interacts with GDI1, GDI2 and CHM; phosphorylation at Thr-80 disrupts these interactions.

The protein localises to the cytoplasmic vesicle. Its subcellular location is the phagosome. It is found in the phagosome membrane. The protein resides in the golgi apparatus. It localises to the trans-Golgi network membrane. The protein localises to the trans-Golgi network. The small GTPases Rab are key regulators of intracellular membrane trafficking, from the formation of transport vesicles to their fusion with membranes. Rabs cycle between an inactive GDP-bound form and an active GTP-bound form that is able to recruit to membranes different set of downstream effectors directly responsible for vesicle formation, movement, tethering and fusion. The low intrinsic GTPase activity of RAB43 is activated by USP6NL. Involved in retrograde transport from the endocytic pathway to the Golgi apparatus. Involved in the transport of Shiga toxin from early and recycling endosomes to the trans-Golgi network. Required for the structural integrity of the Golgi complex. Plays a role in the maturation of phagosomes that engulf pathogens, such as S.aureus and Mycobacterium. The sequence is that of Ras-related protein Rab-43 (Rab43) from Rattus norvegicus (Rat).